The following is a 727-amino-acid chain: Cyclin-T1 (727 aa).

S117 carries the post-translational modification Phosphoserine. The Nuclear localization signal, and interaction with Tat-TAR RNA signature appears at 253 to 270; the sequence is KRIRNWRACQAAKKTKAD. Residues 302–322 show a composition bias toward low complexity; sequence MSTSSTTSTVPSLPTTEESSS. The interval 302-326 is disordered; it reads MSTSSTTSTVPSLPTTEESSSNLSG. K343 is covalently cross-linked (Glycyl lysine isopeptide (Lys-Gly) (interchain with G-Cter in SUMO2)). Residues 386–427 adopt a coiled-coil conformation; that stretch reads SAKVSLKEYRAKHAEELAAQKRQLENMEANVKSQYAYAAQNL. At S390 the chain carries Phosphoserine. Residue K392 is modified to N6-acetyllysine. A Glycyl lysine isopeptide (Lys-Gly) (interchain with G-Cter in SUMO2) cross-link involves residue K417. Residues S418, S476, and S477 each carry the ADP-ribosylserine modification. The histidine-rich domain (HRD) stretch occupies residues 482–552; sequence IKMRIKVHAA…RPGDPKHSSQ (71 aa). Residue K483 forms a Glycyl lysine isopeptide (Lys-Gly) (interchain with G-Cter in SUMO2) linkage. Over residues 486 to 508 the composition is skewed to basic and acidic residues; sequence IKVHAAPDKHNSIDDSVTKSREH. Disordered stretches follow at residues 486-591 and 692-727; these read IKVH…DHPA and LNPR…PLPK. K487 is subject to N6-(ADP-ribosyl)lysine. H489 carries the ADP-ribosylhistidine modification. 2 positions are modified to phosphoserine: S497 and S501. Positions 509 to 532 are enriched in basic residues; it reads KEKHKTHPSNHHHHHNHHSHKHSH. H532 bears the ADP-ribosylhistidine mark. S533, S551, and S554 each carry ADP-ribosylserine. H558 bears the ADP-ribosylhistidine mark. The segment covering 562–572 has biased composition (low complexity); that stretch reads SLSSSFSSSSS. Position 565 is an ADP-ribosylserine (S565). S566 carries the post-translational modification Phosphoserine. A compositionally biased stretch (pro residues) spans 711 to 727; the sequence is LPPLPSEPPPPLPPLPK.

Belongs to the cyclin family. Cyclin C subfamily. As to quaternary structure, cyclin-T1 is the predominant cyclin that associates with CDK9 to form a heterodimer called P-TEFb. P-TEFb forms a complex with AFF4/AF5Q31. Component of a complex which is at least composed of HTATSF1/Tat-SF1, P-TEFb complex, RNA pol II, SUPT5H, and NCL/nucleolin. Component of the 7SK snRNP complex at least composed of P-TEFb (composed of CDK9 and CCNT1/cyclin-T1), HEXIM1, HEXIM2, BCDIN3, SART3 proteins and 7SK and U6 snRNAs. Interacts (via central region) with ZMYND8 (via N-terminus); the interaction is direct and the association appears to occur between homodimeric ZMYND8 and the activated form of the P-TEFb complex. Interacts with BRD4, targets chromatin binding. Interacts with JMJD6. Interacts with MDFIC. Interacts with HSF1. Interacts with HTATSF1. Interacts with TBX21. In terms of processing, ADP-ribosylation on serine residues by PARP1 in response to DNA damage disrupts the phase separation activity of CCNT1, thereby preventing activation of CDK9.

It is found in the nucleus. Regulatory subunit of the cyclin-dependent kinase pair (CDK9/cyclin-T1) complex, also called positive transcription elongation factor B (P-TEFb), which facilitates the transition from abortive to productive elongation by phosphorylating the CTD (C-terminal domain) of the large subunit of RNA polymerase II (RNA Pol II). Required to activate the protein kinase activity of CDK9: acts by mediating formation of liquid-liquid phase separation (LLPS) that enhances binding of P-TEFb to the CTD of RNA Pol II. In Equus caballus (Horse), this protein is Cyclin-T1 (CCNT1).